Reading from the N-terminus, the 504-residue chain is Signal recognition particle receptor FtsY (504 aa).

2 disordered regions span residues 1 to 71 and 116 to 135; these read MFNW…DDYL and ESDQATATEADLPSPETEIT. GTP-binding positions include 308 to 315, 391 to 395, and 455 to 458; these read GVNGAGKT, DTAGR, and TKLD.

It belongs to the GTP-binding SRP family. FtsY subfamily. In terms of assembly, part of the signal recognition particle protein translocation system, which is composed of SRP and FtsY.

Its subcellular location is the cell inner membrane. It localises to the cytoplasm. The catalysed reaction is GTP + H2O = GDP + phosphate + H(+). Its function is as follows. Involved in targeting and insertion of nascent membrane proteins into the cytoplasmic membrane. Acts as a receptor for the complex formed by the signal recognition particle (SRP) and the ribosome-nascent chain (RNC). The protein is Signal recognition particle receptor FtsY of Synechocystis sp. (strain ATCC 27184 / PCC 6803 / Kazusa).